The sequence spans 184 residues: ADP-ribosylation factor-like protein 2 (184 aa).

Gly-2 carries the N-myristoyl glycine lipid modification. Residues 23-30 (GLDNAGKT), 66-70 (DIGGQ), and 125-128 (NKQD) each bind GTP.

The protein belongs to the small GTPase superfamily. Arf family.

Functionally, may be involved in trafficking events within the endosomal system. This chain is ADP-ribosylation factor-like protein 2 (arl2), found in Dictyostelium discoideum (Social amoeba).